The chain runs to 734 residues: Putative K(+)-stimulated pyrophosphate-energized sodium pump (734 aa).

Helical transmembrane passes span 3-23 (SILF…AYYF), 58-78 (IVGC…YGFH), 82-102 (VWVP…GFLG), 134-154 (VMGL…YLLL), and 169-189 (LCVI…QALF). A substrate-binding site is contributed by K199. 4 residues coordinate Mg(2+): D202, D206, N229, and D232. Transmembrane regions (helical) follow at residues 244-264 (LYES…AAFI), 275-295 (AVIA…IGIF), 314-334 (FGTN…LWLL), 336-356 (LDNW…GIVI), 377-397 (SGKT…MLST), 398-418 (AIPV…ASGF), and 423-443 (VGMG…TLGI). D455 is a binding site for Mg(2+). 4 helical membrane-spanning segments follow: residues 491-511 (FAIG…IEEI), 557-577 (GMFL…NAVG), 629-649 (ILAP…GLLI), and 650-670 (GGLS…GAWD). 3 residues coordinate Ca(2+): D670, D696, and D700. Residue K703 participates in substrate binding. Residues 712-732 (ILIKLMSMVAIVMAGLTVAWS) traverse the membrane as a helical segment.

The protein belongs to the H(+)-translocating pyrophosphatase (TC 3.A.10) family. K(+)-stimulated subfamily. As to quaternary structure, homodimer. The cofactor is Mg(2+).

It is found in the cell inner membrane. The enzyme catalyses Na(+)(in) + diphosphate + H2O = Na(+)(out) + 2 phosphate + H(+). With respect to regulation, requires K(+) for maximal activity. Sodium pump that utilizes the energy of pyrophosphate hydrolysis as the driving force for Na(+) movement across the membrane. This Bacteroides thetaiotaomicron (strain ATCC 29148 / DSM 2079 / JCM 5827 / CCUG 10774 / NCTC 10582 / VPI-5482 / E50) protein is Putative K(+)-stimulated pyrophosphate-energized sodium pump.